Reading from the N-terminus, the 240-residue chain is Large ribosomal subunit protein uL2 (240 aa).

A compositionally biased stretch (basic residues) spans Met1–Arg12. Disordered stretches follow at residues Met1–Ser21 and Val198–Lys240. The span at Pro221 to Ser231 shows a compositional bias: basic and acidic residues.

Belongs to the universal ribosomal protein uL2 family. Part of the 50S ribosomal subunit. Forms a bridge to the 30S subunit in the 70S ribosome.

In terms of biological role, one of the primary rRNA binding proteins. Required for association of the 30S and 50S subunits to form the 70S ribosome, for tRNA binding and peptide bond formation. It has been suggested to have peptidyltransferase activity; this is somewhat controversial. Makes several contacts with the 16S rRNA in the 70S ribosome. The sequence is that of Large ribosomal subunit protein uL2 from Halorubrum lacusprofundi (strain ATCC 49239 / DSM 5036 / JCM 8891 / ACAM 34).